A 222-amino-acid polypeptide reads, in one-letter code: Ribulose-phosphate 3-epimerase (222 aa).

Serine 7 is a substrate binding site. Residues histidine 32, aspartate 34, and histidine 65 each contribute to the a divalent metal cation site. Aspartate 34 functions as the Proton acceptor in the catalytic mechanism. Residues histidine 65, 141 to 144 (GFSG), 174 to 176 (DGG), and 196 to 197 (GS) each bind substrate. Aspartate 174 lines the a divalent metal cation pocket. Residue aspartate 174 is the Proton donor of the active site.

This sequence belongs to the ribulose-phosphate 3-epimerase family. A divalent metal cation serves as cofactor.

It carries out the reaction D-ribulose 5-phosphate = D-xylulose 5-phosphate. The protein operates within carbohydrate degradation. Its function is as follows. Catalyzes the reversible epimerization of D-ribulose 5-phosphate to D-xylulose 5-phosphate. The sequence is that of Ribulose-phosphate 3-epimerase from Aquifex aeolicus (strain VF5).